The sequence spans 459 residues: Periodic tryptophan protein 1 homolog (459 aa).

The segment at 44–84 (GDTQQELDEESDDDAEEGENAEEDQNDMDVDDHADANSENR) is disordered. Over residues 48–73 (QELDEESDDDAEEGENAEEDQNDMDV) the composition is skewed to acidic residues. Over residues 74–84 (DDHADANSENR) the composition is skewed to basic and acidic residues. WD repeat units lie at residues 168-214 (LLPS…AIEP), 232-272 (GHKD…PHTT), 275-315 (AFGK…GVNS), 321-361 (KVDG…QLLW), and 365-405 (AHNE…AKHV). A Phosphoserine modification is found at Ser-385.

The protein belongs to the WD repeat PWP1 family. Interacts with Mybbp1A. In terms of processing, phosphorylated in response to nutrient-activated TORC1 signaling. In terms of tissue distribution, detected in the germline of adult testis and ovary (at protein level). Detected in ovary somatic cells, in zfh1-positive cyst cells in the testis and absent in differentiated cyst cells (at protein level).

The protein localises to the nucleus. The protein resides in the nucleolus. It localises to the chromosome. It is found in the nucleoplasm. Its function is as follows. Chromatin-associated factor that regulates transcription. Regulates Pol I-mediated rRNA biogenesis and, probably, Pol III-mediated transcription. Regulates the localization to the nucleolus of Cdk7, a regulator of the Pol I-elongation factor TFIIH. Acts as a regulator of cell proliferation and tissue growth as part of the TORC1 and Myc signaling pathway in response to nutrients. Required in males for both germline stem cell (GSC) maintenance and early stages of germ cell differentiation of germ cell cysts. Not required for female germline stem cell (GSC) maintenance, but necessary to regulate germ cell differentiation and egg chamber development. In female somatic cells, required for follicle stem cell survival and maintenance. This Drosophila melanogaster (Fruit fly) protein is Periodic tryptophan protein 1 homolog.